We begin with the raw amino-acid sequence, 423 residues long: Phosphoribosylamine--glycine ligase (423 aa).

Residues 107–314 (KAFMAKYNIP…LSDLVEAAID (208 aa)) form the ATP-grasp domain. 133–194 (VNQKGAPIVI…EDFLQGEEAS (62 aa)) is an ATP binding site. Residues Glu-284 and Asn-286 each contribute to the Mg(2+) site.

Belongs to the GARS family. Mg(2+) serves as cofactor. Requires Mn(2+) as cofactor.

The catalysed reaction is 5-phospho-beta-D-ribosylamine + glycine + ATP = N(1)-(5-phospho-beta-D-ribosyl)glycinamide + ADP + phosphate + H(+). It participates in purine metabolism; IMP biosynthesis via de novo pathway; N(1)-(5-phospho-D-ribosyl)glycinamide from 5-phospho-alpha-D-ribose 1-diphosphate: step 2/2. In Neisseria meningitidis serogroup B (strain ATCC BAA-335 / MC58), this protein is Phosphoribosylamine--glycine ligase.